The following is a 517-amino-acid chain: Serine O-succinyltransferase (517 aa).

A mitochondrion-targeting transit peptide spans 1 to 46; sequence MSPLNGVARSFPRPFQAVTRRPFRVVQPAIACPSNSRSFNHSRSLR. The segment covering 36-64 has biased composition (polar residues); that stretch reads SRSFNHSRSLRSTGSQSPAPSPRDSSNPA. The interval 36 to 66 is disordered; it reads SRSFNHSRSLRSTGSQSPAPSPRDSSNPALS. Residues 134–386 form the AB hydrolase-1 domain; sequence NVILLHTGLS…LTQQLATKKQ (253 aa). The interval 141-144 is important for substrate specificity; it reads GLSA. Ser238 acts as the Nucleophile in catalysis. Arg307 contacts substrate. A disordered region spans residues 413–436; that stretch reads QPYQEQPSASTSAEQSASASETGS. The segment covering 416–436 has biased composition (low complexity); it reads QEQPSASTSAEQSASASETGS. Catalysis depends on residues Asp461 and His498. Asp499 provides a ligand contact to substrate.

It belongs to the AB hydrolase superfamily. MetX family.

It is found in the mitochondrion. It catalyses the reaction succinyl-CoA + L-serine = O-succinyl-L-serine + CoA. It participates in amino-acid biosynthesis; L-cysteine biosynthesis; L-cysteine from L-serine: step 1/2. Functionally, transfers a succinyl group from succinyl-CoA to L-serine, forming succinyl-L-serine. Also has weak serine acetyl transferase activity and homoserine succinyl transferase activity. The polypeptide is Serine O-succinyltransferase (Emericella nidulans (strain FGSC A4 / ATCC 38163 / CBS 112.46 / NRRL 194 / M139) (Aspergillus nidulans)).